We begin with the raw amino-acid sequence, 223 residues long: Cytidylate kinase (223 aa).

Position 10-18 (10-18 (GPAGAGKST)) interacts with ATP.

It belongs to the cytidylate kinase family. Type 1 subfamily.

Its subcellular location is the cytoplasm. It carries out the reaction CMP + ATP = CDP + ADP. The catalysed reaction is dCMP + ATP = dCDP + ADP. This chain is Cytidylate kinase, found in Exiguobacterium sibiricum (strain DSM 17290 / CCUG 55495 / CIP 109462 / JCM 13490 / 255-15).